Reading from the N-terminus, the 114-residue chain is UPF0145 protein TTHA1944 (114 aa).

This sequence belongs to the UPF0145 family.

This Thermus thermophilus (strain ATCC 27634 / DSM 579 / HB8) protein is UPF0145 protein TTHA1944.